A 990-amino-acid polypeptide reads, in one-letter code: Bifunctional glutamine synthetase adenylyltransferase/adenylyl-removing enzyme (990 aa).

An adenylyl removase region spans residues 1 to 474 (MIFSAITADL…HYAKLFEGDP (474 aa)). The adenylyl transferase stretch occupies residues 478–990 (AKLPPVDYGA…FSRLIGGEDA (513 aa)).

It belongs to the GlnE family. The cofactor is Mg(2+).

It carries out the reaction [glutamine synthetase]-O(4)-(5'-adenylyl)-L-tyrosine + phosphate = [glutamine synthetase]-L-tyrosine + ADP. The enzyme catalyses [glutamine synthetase]-L-tyrosine + ATP = [glutamine synthetase]-O(4)-(5'-adenylyl)-L-tyrosine + diphosphate. Involved in the regulation of glutamine synthetase GlnA, a key enzyme in the process to assimilate ammonia. When cellular nitrogen levels are high, the C-terminal adenylyl transferase (AT) inactivates GlnA by covalent transfer of an adenylyl group from ATP to specific tyrosine residue of GlnA, thus reducing its activity. Conversely, when nitrogen levels are low, the N-terminal adenylyl removase (AR) activates GlnA by removing the adenylyl group by phosphorolysis, increasing its activity. The regulatory region of GlnE binds the signal transduction protein PII (GlnB) which indicates the nitrogen status of the cell. In Rhodopseudomonas palustris (strain ATCC BAA-98 / CGA009), this protein is Bifunctional glutamine synthetase adenylyltransferase/adenylyl-removing enzyme.